Here is a 342-residue protein sequence, read N- to C-terminus: MEEADLTLPLSQDTFHDLWNNVFLSTENESLAPPEGLLSQNMDFWEDPETMQETKNVPTAPTVPAISNYAGEHGFNLEFNDSGTAKSVTSTYSVKLGKLFCQLAKTTPIGVLVKEEPPQGAVIRATSVYKKTEHVGEVVKRCPHHQSEDLSDNKSHLIRVEGSQLAQYFEDPNTRRHSVTVPYERPQLGSEMTTILLSFMCNSSCMGGMNRRPILTILTLETTEGEVLGRRCFEVRVCACPGRDRKTEEGNLEKSGTKQTKKRKSAPAPDTSTAKKSKSASSGEDEDKEIYTLSIRGRNRYLWFKSLNDGLELMDKTGPKIKQEIPAPSSGKRLLKGGSDSD.

The transcription activation (acidic) stretch occupies residues 1-35; the sequence is MEEADLTLPLSQDTFHDLWNNVFLSTENESLAPPE. A DNA-binding region spans residues 68–255; that stretch reads NYAGEHGFNL…KTEEGNLEKS (188 aa). Cysteine 142, histidine 145, cysteine 201, and cysteine 205 together coordinate Zn(2+). Residues 236–243 form an interaction with DNA region; that stretch reads RVCACPGR. Positions 244 to 256 are enriched in basic and acidic residues; that stretch reads DRKTEEGNLEKSG. Residues 244–287 form a disordered region; sequence DRKTEEGNLEKSGTKQTKKRKSAPAPDTSTAKKSKSASSGEDED. A Bipartite nuclear localization signal motif is present at residues 261–278; the sequence is KKRKSAPAPDTSTAKKSK. Over residues 271–282 the composition is skewed to low complexity; the sequence is TSTAKKSKSASS. The segment at 288–317 is oligomerization; the sequence is KEIYTLSIRGRNRYLWFKSLNDGLELMDKT. The Nuclear export signal signature appears at 302 to 313; sequence LWFKSLNDGLEL. Residues 318 to 342 are disordered; sequence GPKIKQEIPAPSSGKRLLKGGSDSD. The interval 319 to 336 is basic (repression of DNA-binding); the sequence is PKIKQEIPAPSSGKRLLK.

This sequence belongs to the p53 family. In terms of assembly, binds DNA as a homotetramer. Zn(2+) is required as a cofactor.

It localises to the cytoplasm. It is found in the nucleus. Multifunctional transcription factor that induces cell cycle arrest, DNA repair or apoptosis upon binding to its target DNA sequence. Acts as a tumor suppressor in many tumor types; induces growth arrest or apoptosis depending on the physiological circumstances and cell type. Negatively regulates cell division by controlling expression of a set of genes required for this process. One of the activated genes is an inhibitor of cyclin-dependent kinases. Apoptosis induction seems to be mediated either by stimulation of BAX and FAS antigen expression, or by repression of Bcl-2 expression. The polypeptide is Cellular tumor antigen p53 (tp53) (Xiphophorus hellerii (Green swordtail)).